Here is a 220-residue protein sequence, read N- to C-terminus: Peptide methionine sulfoxide reductase MsrA (220 aa).

Residue C54 is part of the active site.

The protein belongs to the MsrA Met sulfoxide reductase family.

The catalysed reaction is L-methionyl-[protein] + [thioredoxin]-disulfide + H2O = L-methionyl-(S)-S-oxide-[protein] + [thioredoxin]-dithiol. It carries out the reaction [thioredoxin]-disulfide + L-methionine + H2O = L-methionine (S)-S-oxide + [thioredoxin]-dithiol. Its function is as follows. Has an important function as a repair enzyme for proteins that have been inactivated by oxidation. Catalyzes the reversible oxidation-reduction of methionine sulfoxide in proteins to methionine. The protein is Peptide methionine sulfoxide reductase MsrA of Salinispora arenicola (strain CNS-205).